Consider the following 467-residue polypeptide: Regulatory protein NPR6 (467 aa).

Positions 27 to 111 (SDVTFSVEGR…LYSGQVSIVP (85 aa)) constitute a BTB domain. The C2HC NPR-type zinc-finger motif lies at 117 to 131 (RSNCGDRGCWHTHCT). Cysteine 120, cysteine 125, histidine 127, and cysteine 130 together coordinate Zn(2+). ANK repeat units follow at residues 247–276 (QKIR…LNLD), 277–306 (ESLA…DVNY), 311–340 (TGKT…DPNV), and 344–378 (DGIT…KLRL). Positions 434 to 467 (RDIGDDNSNQREGMNLHHHHHDPSTMYHHHHHHF) are disordered. Positions 449-467 (LHHHHHDPSTMYHHHHHHF) are enriched in basic residues.

Belongs to the plant 'ANKYRIN-BTB/POZ' family. 'NOOT-BOP-COCH-like' (NBCL) subfamily. As to quaternary structure, homodimer or heterodimer with BOP2. Interacts with PAN.

It localises to the cytoplasm. It is found in the nucleus. It participates in protein modification; protein ubiquitination. Functionally, may act as a substrate-specific adapter of an E3 ubiquitin-protein ligase complex (CUL3-RBX1-BTB) which mediates the ubiquitination and subsequent proteasomal degradation of target proteins. Acts redundantly with BOP2. BOP1/2 promote leaf and floral meristem fate and determinacy in a pathway targeting AP1 and AGL24. BOP1/2 act as transcriptional co-regulators through direct interaction with TGA factors, including PAN, a direct regulator of AP1. Controls lateral organ fate through positive regulation of adaxial-abaxial polarity genes ATHB-14/PHB, YAB1/FIL and YAB3, and through positive regulation of LOB domain-containing genes LOB, LBD6/AS2 and LBD36. Promotes and maintains a developmentally determinate state in leaf cells through the negative regulation of JAG, JGL and class I KNOX genes. Is also involved in nectary development, formation of normal abscission zones (AZs) and suppression of bract formation, probably by regulating the cell wall disorganization. This is Regulatory protein NPR6 from Arabidopsis thaliana (Mouse-ear cress).